The sequence spans 833 residues: V-type proton ATPase 116 kDa subunit a 4 (833 aa).

Residues 1 to 390 (MASVFRSEEM…DAYGVGSYRE (390 aa)) are Cytoplasmic-facing. Residues 391 to 409 (INPAPYTIITFPFLFAVMF) form a helical membrane-spanning segment. Over 410–411 (GD) the chain is Vacuolar. Residues 412 to 428 (CGHGMVMLMAALWMVLN) form a helical membrane-spanning segment. Residues 429-443 (ERHLLAQKSTNEMWN) are Cytoplasmic-facing. A helical transmembrane segment spans residues 444–473 (IFFNGRYLILLMGIFSIYTGLIYNDCFSKS). The Vacuolar segment spans residues 474–538 (FNIFGSSWSV…ASNKLTFLNS (65 aa)). A helical membrane pass occupies residues 539–558 (YKMKMSVILGIAHMIFGVIL). Residues 559-576 (SLFNHIYFRRTLNIILQF) are Cytoplasmic-facing. The helical transmembrane segment at 577 to 597 (IPEMIFMLSLFGYLVFMIIFK) threads the bilayer. The Vacuolar portion of the chain corresponds to 598–642 (WCRYDAHTSRKAPSILIHFIGMFLFDYDDSSNAPLYGHQQEVQTF). The chain crosses the membrane as a helical span at residues 643 to 662 (FVIIALVSVPWMLLIKPFVL). The Cytoplasmic segment spans residues 663-720 (RAKHQKSQLQSFTIHEDAVEGDHSGHSSKKTAGAHGMKDGHEEEFNFGDIFVHQAIHT). The disordered stretch occupies residues 681 to 700 (VEGDHSGHSSKKTAGAHGMK). A helical transmembrane segment spans residues 721 to 745 (IEYCLGCISNTASYLRLWALSLAHA). Residues 746–766 (ELSEVLWTMVMSIGLRLQGWA) are Vacuolar-facing. Residues 767–805 (GLVGVFIIFAVFAVLTVAILLVMEGLSAFLHALRLHWVE) form a helical membrane-spanning segment. The Cytoplasmic portion of the chain corresponds to 806–833 (FQNKFYEGAGSKFSPFSFKHVLEGTAEE).

This sequence belongs to the V-ATPase 116 kDa subunit family. As to quaternary structure, V-ATPase is a heteromultimeric enzyme made up of two complexes: the ATP-hydrolytic V1 complex and the proton translocation V0 complex. The V1 complex consists of three catalytic AB heterodimers that form a heterohexamer, three peripheral stalks each consisting of EG heterodimers, one central rotor including subunits D and F, and the regulatory subunits C and H. The proton translocation complex V0 consists of the proton transport subunit a, a ring of proteolipid subunits c9c'', rotary subunit d, subunits e and f, and the accessory subunits ATP6AP1/Ac45 and ATP6AP2/PRR. Interacts with the V1 complex V-ATPase subunit A ATP6V1A. Interacts with the V0 complex V-ATPase subunit c ATP6V0C. In terms of tissue distribution, specifically expressed in kidney, but not in the heart, brain, spleen, lung, liver, muscle, or testis. Distribution within the kidney appears more widespread than that seen in man. High intensity staining at the surface of intercalated cells, with additional expression in the proximal tubule.

The protein resides in the apical cell membrane. It is found in the basolateral cell membrane. In terms of biological role, subunit of the V0 complex of vacuolar(H+)-ATPase (V-ATPase), a multisubunit enzyme composed of a peripheral complex (V1) that hydrolyzes ATP and a membrane integral complex (V0) that translocates protons. V-ATPase is responsible for acidifying and maintaining the pH of intracellular compartments and in some cell types, is targeted to the plasma membrane, where it is responsible for acidifying the extracellular environment. Involved in normal vectorial acid transport into the urine by the kidney. This chain is V-type proton ATPase 116 kDa subunit a 4 (Atp6v0a4), found in Mus musculus (Mouse).